The sequence spans 279 residues: Putative E3 ubiquitin-protein ligase C36B7.05c (279 aa).

The segment at 27 to 122 (DDESAQCNNC…VCVNCRQQLS (96 aa)) adopts an FYVE-type zinc-finger fold. The Zn(2+) site is built by cysteine 33, cysteine 36, cysteine 49, cysteine 52, cysteine 57, cysteine 60, cysteine 114, and cysteine 117. Serine 200 carries the post-translational modification Phosphoserine. The RING-type; atypical zinc finger occupies 230–273 (CIICFEEFAAGDRVARIEYCLCIFHLKCYRDWLSTGAAGCPVHA).

It localises to the cytoplasm. It is found in the nucleus. The protein localises to the endosome membrane. Its subcellular location is the vacuole membrane. It catalyses the reaction S-ubiquitinyl-[E2 ubiquitin-conjugating enzyme]-L-cysteine + [acceptor protein]-L-lysine = [E2 ubiquitin-conjugating enzyme]-L-cysteine + N(6)-ubiquitinyl-[acceptor protein]-L-lysine.. Its pathway is protein modification; protein ubiquitination. In terms of biological role, functions as an E3 ubiquitin-protein ligase. Binds phospholipid vesicles containing phosphatidylinositol 3-phosphate. This chain is Putative E3 ubiquitin-protein ligase C36B7.05c, found in Schizosaccharomyces pombe (strain 972 / ATCC 24843) (Fission yeast).